The following is a 562-amino-acid chain: MDCISTKNNKINKIKFSITIIAFILLYYLIPLNYRDLWQPDETRYAEISREMLQNKNWSIPYLLDIRYFEKPIFGYWINSISQFFFGHNNFSVRFGSFLFTLFSANLIYLFSKKIWKNKILSLNSVIIFLSILLVYIIGTYSVLDSIISFWINLSMISFWLASTSKVKKYKIKNYIILGISIGIGFITKGFISLLIPFISIFIWLFLTKININKTIIHCFFSLLISILIIFPWIYKISYLEKDFIRYFIFIEHIQRFIGENAQHKSPFWYYFPIFIIGCLPWSGFLFSTLNLAWNTRKNKKIEFYLLLWIIVQFCFFSISKGKLPTYILPCFFPLSILIAKNIEKCNLKNKKKLLKINSIINTIVGSTLLIFIILHEKYKFFGCSLYNKNEYYKLILCIFSIFVWIFLNLCIIFNDFKFWRITSLSIIGIAFLFGLYVPEKIIYAKQPQLFIKEVFDDLESSDFIFSNNIGLSTAISWEIKKNNIFIFENKGELEYGLSYLDSKHRFIKKEDFKNWLSKNKEKKISLVMLLPDKHYNWKKFNVPETKKFFQHERLILLKYNF.

12 consecutive transmembrane segments (helical) span residues 14–34 (IKFS…PLNY), 91–111 (FSVR…IYLF), 120–140 (ILSL…IIGT), 142–162 (SVLD…FWLA), 186–206 (FITK…IWLF), 215–235 (TIIH…PWIY), 267–287 (PFWY…GFLF), 302–322 (IEFY…ISKG), 324–344 (LPTY…KNIE), 354–374 (LLKI…IFII), 395–415 (LILC…IIFN), and 425–445 (LSII…IIYA).

Belongs to the glycosyltransferase 83 family.

It is found in the cell inner membrane. It carries out the reaction 4-amino-4-deoxy-alpha-L-arabinopyranosyl di-trans,octa-cis-undecaprenyl phosphate + lipid IVA = lipid IIA + di-trans,octa-cis-undecaprenyl phosphate.. Its pathway is lipopolysaccharide metabolism; 4-amino-4-deoxy-beta-L-arabinose-lipid A biosynthesis. In terms of biological role, catalyzes the transfer of the L-Ara4N moiety of the glycolipid undecaprenyl phosphate-alpha-L-Ara4N to lipid A. The modified arabinose is attached to lipid A and is required for resistance to polymyxin and cationic antimicrobial peptides. The polypeptide is Undecaprenyl phosphate-alpha-4-amino-4-deoxy-L-arabinose arabinosyl transferase (Wigglesworthia glossinidia brevipalpis).